The chain runs to 243 residues: Toxin CcTX-1 (243 aa).

Residues 1–25 (SSPEKKNDMSKPGRMRFDNKKEPRS) are compositionally biased toward basic and acidic residues. Residues 1 to 48 (SSPEKKNDMSKPGRMRFDNKKEPRSSAKNSGNGYGCVDVNAGREPLTG) form a disordered region.

Contains disulfide bonds. Nematocytes.

It is found in the secreted. It localises to the nematocyst. The protein localises to the target cell membrane. Functionally, has potent hemolytic activity. Is lethal to crayfish. Causes cutaneous inflammation in humans. May act as a pore-forming toxin, disrupting normal transmembrane ion concentration gradients in susceptible cells. This is Toxin CcTX-1 from Cyanea capillata (Lion's mane jellyfish).